A 411-amino-acid chain; its full sequence is Adherens junction-associated protein 1 (411 aa).

The first 43 residues, 1-43 (MWIQQLLGLSSMSIRWPGRPLGSHAWILIAMFQLAVDLPACEA), serve as a signal peptide directing secretion. The Extracellular segment spans residues 44–282 (LGPGPEFWLL…GEASGLAVHQ (239 aa)). Disordered regions lie at residues 89–108 (IHGQMQMPRARRAHRPRDQA), 115–197 (AGLA…SNTF), and 239–268 (SLDPRRRIPGGVSTTEPSTSPSNNGEVTQP). The segment covering 115–146 (AGLAKPPAAAKSSPSLASSSSSSSSAVAGGAP) has biased composition (low complexity). A compositionally biased stretch (polar residues) spans 166–178 (SFDSRGSRPTTET). Over residues 247–263 (PGGVSTTEPSTSPSNNG) the composition is skewed to low complexity. Residues 283–303 (IITITVSLIMVIAALITTLVL) form a helical membrane-spanning segment. The interval 303–411 (LKNCCAQSGN…VSEKWFEISC (109 aa)) is targeting signals. The Cytoplasmic portion of the chain corresponds to 304–411 (KNCCAQSGNT…VSEKWFEISC (108 aa)). Positions 311-330 (GNTRRNSHQRKTNQQEESCQ) are disordered.

As to quaternary structure, forms a complex with CDH1 and CTNNB1; interacts directly with CTNNB1. Interacts with AP1M2. Interacts with isoform 2 of BSG/CD147. In terms of processing, thr-237 and Ser-239 may be phosphorylated; however as this position is probably extracellular, the in vivo relevance is not proven. As to expression, expressed in uterus and pancreas (at protein level).

It localises to the basolateral cell membrane. The protein localises to the apical cell membrane. Its subcellular location is the cell junction. The protein resides in the adherens junction. Plays a role in cell adhesion and cell migration. In Homo sapiens (Human), this protein is Adherens junction-associated protein 1 (AJAP1).